A 1689-amino-acid polypeptide reads, in one-letter code: DNA-directed RNA polymerase I subunit rpa1 (1689 aa).

Zn(2+)-binding residues include cysteine 63, cysteine 66, cysteine 73, and histidine 76. Phosphoserine occurs at positions 159 and 161. Residues 269–280 (VLRDTSKKHHED) show a composition bias toward basic and acidic residues. Residues 269-295 (VLRDTSKKHHEDEGYDGDSDSSNESEV) form a disordered region. Over residues 281-295 (EGYDGDSDSSNESEV) the composition is skewed to acidic residues. Mg(2+) contacts are provided by aspartate 643, aspartate 645, and aspartate 647. The bridging helix stretch occupies residues 1005–1017 (PQEYYFHCMAGRE). The disordered stretch occupies residues 1346-1440 (RKSGGKDDTV…EEDEGFKSDE (95 aa)). 2 positions are modified to phosphoserine: serine 1438 and serine 1441.

The protein belongs to the RNA polymerase beta' chain family. As to quaternary structure, component of the RNA polymerase I (Pol I) complex consisting of at least 13 subunits.

It is found in the nucleus. The protein resides in the nucleolus. The enzyme catalyses RNA(n) + a ribonucleoside 5'-triphosphate = RNA(n+1) + diphosphate. In terms of biological role, DNA-dependent RNA polymerase catalyzes the transcription of DNA into RNA using the four ribonucleoside triphosphates as substrates. Largest and catalytic core component of RNA polymerase I which synthesizes ribosomal RNA precursors. Forms the polymerase active center together with the second largest subunit. A single stranded DNA template strand of the promoter is positioned within the central active site cleft of Pol I. A bridging helix emanates from RPA1 and crosses the cleft near the catalytic site and is thought to promote translocation of Pol I by acting as a ratchet that moves the RNA-DNA hybrid through the active site by switching from straight to bent conformations at each step of nucleotide addition. This is DNA-directed RNA polymerase I subunit rpa1 (rpa1) from Schizosaccharomyces pombe (strain 972 / ATCC 24843) (Fission yeast).